Here is a 204-residue protein sequence, read N- to C-terminus: Cytochrome c biogenesis ATP-binding export protein CcmA (204 aa).

The 202-residue stretch at 2–203 (LEADNLECVR…PAGTVRELRL (202 aa)) folds into the ABC transporter domain. 34–41 (GRNGAGKT) contributes to the ATP binding site.

It belongs to the ABC transporter superfamily. CcmA exporter (TC 3.A.1.107) family. As to quaternary structure, the complex is composed of two ATP-binding proteins (CcmA) and two transmembrane proteins (CcmB).

Its subcellular location is the cell inner membrane. It catalyses the reaction heme b(in) + ATP + H2O = heme b(out) + ADP + phosphate + H(+). Functionally, part of the ABC transporter complex CcmAB involved in the biogenesis of c-type cytochromes; once thought to export heme, this seems not to be the case, but its exact role is uncertain. Responsible for energy coupling to the transport system. The chain is Cytochrome c biogenesis ATP-binding export protein CcmA from Dechloromonas aromatica (strain RCB).